Consider the following 309-residue polypeptide: Wall-associated proteinase (309 aa).

Residues N190 and N295 are each glycosylated (N-linked (GlcNAc...) asparagine).

It localises to the secreted. The protein localises to the cell wall. The protein resides in the membrane. May participate in wall plasticization and/or intussusception or in cell wall turnover. The sequence is that of Wall-associated proteinase from Coccidioides immitis (strain RS) (Valley fever fungus).